We begin with the raw amino-acid sequence, 204 residues long: Inactive ribonuclease-like protein 9 (204 aa).

Positions 1–26 are cleaved as a signal peptide; sequence MMRTLITIHPLPLLLLLQQLLQPVQF. Disulfide bonds link Cys97/Cys152, Cys115/Cys167, and Cys122/Cys129. N-linked (GlcNAc...) asparagine glycans are attached at residues Asn130 and Asn142.

Belongs to the pancreatic ribonuclease family.

The protein resides in the secreted. Does not exhibit any ribonuclease activity. This chain is Inactive ribonuclease-like protein 9 (RNASE9), found in Symphalangus syndactylus (Siamang).